The following is a 64-amino-acid chain: Large ribosomal subunit protein bL35 (64 aa).

The protein belongs to the bacterial ribosomal protein bL35 family.

The chain is Large ribosomal subunit protein bL35 from Coxiella burnetii (strain RSA 493 / Nine Mile phase I).